Consider the following 842-residue polypeptide: Glycogen phosphorylase, muscle form (842 aa).

An N-acetylserine modification is found at serine 2. Serine 15 carries the phosphoserine; by PHK; in form phosphorylase A modification. AMP is bound by residues aspartate 43 and tyrosine 76. Residues tyrosine 204 and tyrosine 227 each carry the phosphotyrosine modification. 310–319 (RRFKSSKFGC) lines the AMP pocket. Serine 430 bears the Phosphoserine mark. Position 473 is a phosphotyrosine (tyrosine 473). Serine 514 is subject to Phosphoserine. Lysine 681 is subject to N6-(pyridoxal phosphate)lysine. Serine 747 and serine 748 each carry phosphoserine.

This sequence belongs to the glycogen phosphorylase family. As to quaternary structure, homodimer. Homotetramer; to form the enzymatically active phosphorylase A. Pyridoxal 5'-phosphate is required as a cofactor. In terms of processing, phosphorylation of Ser-15 converts phosphorylase B (unphosphorylated) to phosphorylase A.

The enzyme catalyses [(1-&gt;4)-alpha-D-glucosyl](n) + phosphate = [(1-&gt;4)-alpha-D-glucosyl](n-1) + alpha-D-glucose 1-phosphate. With respect to regulation, allosterically regulated through the non-covalent binding of metabolites, being activated by AMP and inhibited by ATP, ADP, and glucose-6-phosphate. The activity is also controlled by post-translational modifications including phosphorylation. Allosteric enzyme that catalyzes the rate-limiting step in glycogen catabolism, the phosphorolytic cleavage of glycogen to produce glucose-1-phosphate, and plays a central role in maintaining cellular and organismal glucose homeostasis. In Homo sapiens (Human), this protein is Glycogen phosphorylase, muscle form.